A 294-amino-acid chain; its full sequence is ATP synthase gamma chain (294 aa).

This sequence belongs to the ATPase gamma chain family. As to quaternary structure, F-type ATPases have 2 components, CF(1) - the catalytic core - and CF(0) - the membrane proton channel. CF(1) has five subunits: alpha(3), beta(3), gamma(1), delta(1), epsilon(1). CF(0) has three main subunits: a, b and c.

It is found in the cell inner membrane. Functionally, produces ATP from ADP in the presence of a proton gradient across the membrane. The gamma chain is believed to be important in regulating ATPase activity and the flow of protons through the CF(0) complex. This is ATP synthase gamma chain from Rhizobium rhizogenes (strain K84 / ATCC BAA-868) (Agrobacterium radiobacter).